Consider the following 204-residue polypeptide: Ribonuclease HII (204 aa).

In terms of domain architecture, RNase H type-2 spans 13–204 (GPVAGCDEAG…VRRAARLHSS (192 aa)). Positions 19, 20, and 113 each coordinate a divalent metal cation.

It belongs to the RNase HII family. Mn(2+) serves as cofactor. Requires Mg(2+) as cofactor.

The protein resides in the cytoplasm. It catalyses the reaction Endonucleolytic cleavage to 5'-phosphomonoester.. Functionally, endonuclease that specifically degrades the RNA of RNA-DNA hybrids. The protein is Ribonuclease HII of Cutibacterium acnes (strain DSM 16379 / KPA171202) (Propionibacterium acnes).